Reading from the N-terminus, the 736-residue chain is MASIVEGPLSKWTNVMKGWQYRWFVLDYNAGLLSYYTSKDKMMRGSRRGCVRLRGAVIGIDDEDDSTFTITVDQKTFHFQARDADEREKWIHALEETILRHTLQLQGLDSGFIPSVQDFDKKLTEADAYLQILIEQLKLFDDKLQNCKDDEQRKKVETLKDTTNSMVESIKHCIVLLQIAKDQSNAEQHADGIISTINPVDAIYQPSPLEPVISTMPSQTALPPEPAQLCKSEQRPSSLPVGPVLATLGHHQTPTPNSTGSGNSPPSSSLTPPSHVNLSPNTVPEFSYSSSEDEFYDADEFHQSGSSPKRLIDSSGSASVLTHSSSGNSLKRPDTTESLNSSMSNGTSDADLFDSHDDRDDDGEAGSVEEHKSVIMHLLSQVRLGMDLTKVVLPTFILERRSLLEMYADFFAHPDLFVSISDQKDPRDRMVQVVKWYLSAFHAGRRGSVAKKPYNPILGEIFQCHWTLPNDTEENAELVSEGPVPWVSKNSVTFVAEQVSHHPPISAFYAECFNKKIQFNAHIWTKSKFLGMSIGVHNIGQGCVSCLEYDEHYILTFPNGYGRSILTVPWVELGGECNINCSKTGYSANIVFHTKPFYGGKKHRITAEIFSPNDKKSFCSIEGEWNGIMYAKYATGENTVFVDTKKLPIIKKKVRKLEDQNEYESRSLWKDVTFNLKIRDIDAATEAKHRLEERQRAEARERKEKEIQWETRLFHEDGECWVYDEPLLKRLGAVKH.

Position 2 is an N-acetylalanine (Ala2). The 98-residue stretch at 2–99 (ASIVEGPLSK…WIHALEETIL (98 aa)) folds into the PH domain. The tract at residues 209–368 (LEPVISTMPS…RDDDGEAGSV (160 aa)) is disordered. Residues 253–274 (TPTPNSTGSGNSPPSSSLTPPS) are compositionally biased toward low complexity. Phosphoserine occurs at positions 306, 324, 325, 326, and 329. 2 stretches are compositionally biased toward polar residues: residues 314 to 329 (SSGS…SGNS) and 336 to 348 (TESL…NGTS). Phosphoserine is present on Ser611.

This sequence belongs to the OSBP family. As to quaternary structure, heterodimer with OSBPL11. Interacts with OSBPL10.

The protein localises to the late endosome membrane. It is found in the golgi apparatus. Its subcellular location is the trans-Golgi network membrane. It carries out the reaction a 1,2-diacyl-sn-glycero-3-phospho-(1D-myo-inositol 4-phosphate)(out) + a 1,2-diacyl-sn-glycero-3-phospho-L-serine(in) = a 1,2-diacyl-sn-glycero-3-phospho-(1D-myo-inositol 4-phosphate)(in) + a 1,2-diacyl-sn-glycero-3-phospho-L-serine(out). Its function is as follows. Interacts with OSBPL11 to function as lipid transfer proteins. Together they form a heterodimer that localizes at the ER-trans-Golgi membrane contact sites, and exchanges phosphatidylserine (1,2-diacyl-sn-glycero-3-phospho-L-serine, PS) for phosphatidylinositol-4-phosphate (1,2-diacyl-sn-glycero-3-phospho-(1D-myo-inositol 4-phosphate), PI(4)P) between the two organelles, a step that is critical for sphingomyelin synthesis in the Golgi complex. The chain is Oxysterol-binding protein-related protein 9 (Osbpl9) from Mus musculus (Mouse).